The primary structure comprises 236 residues: Orotidine 5'-phosphate decarboxylase (236 aa).

Residues aspartate 14, lysine 36, 63 to 72 (DLKFHDIPNT), threonine 122, arginine 183, glutamine 192, glycine 212, and arginine 213 contribute to the substrate site. Catalysis depends on lysine 65, which acts as the Proton donor.

It belongs to the OMP decarboxylase family. Type 1 subfamily. In terms of assembly, homodimer.

It catalyses the reaction orotidine 5'-phosphate + H(+) = UMP + CO2. It functions in the pathway pyrimidine metabolism; UMP biosynthesis via de novo pathway; UMP from orotate: step 2/2. Catalyzes the decarboxylation of orotidine 5'-monophosphate (OMP) to uridine 5'-monophosphate (UMP). In Chromohalobacter salexigens (strain ATCC BAA-138 / DSM 3043 / CIP 106854 / NCIMB 13768 / 1H11), this protein is Orotidine 5'-phosphate decarboxylase.